The sequence spans 160 residues: Transcription elongation factor GreA (160 aa).

Residues 2–81 (AEKKNILTYE…KNAEVVVEDE (80 aa)) are a coiled coil. The segment at 36-55 (KEAREQGDLSENAEYDAAKD) is disordered.

This sequence belongs to the GreA/GreB family.

Necessary for efficient RNA polymerase transcription elongation past template-encoded arresting sites. The arresting sites in DNA have the property of trapping a certain fraction of elongating RNA polymerases that pass through, resulting in locked ternary complexes. Cleavage of the nascent transcript by cleavage factors such as GreA or GreB allows the resumption of elongation from the new 3'terminus. GreA releases sequences of 2 to 3 nucleotides. This chain is Transcription elongation factor GreA, found in Lachnoclostridium phytofermentans (strain ATCC 700394 / DSM 18823 / ISDg) (Clostridium phytofermentans).